Reading from the N-terminus, the 2038-residue chain is Non-reducing polyketide synthase ZEA1 (2038 aa).

The tract at residues 9–246 (LLFGDQTDSW…NELNIHALQH (238 aa)) is N-terminal acylcarrier protein transacylase domain (SAT). One can recognise a Ketosynthase family 3 (KS3) domain in the interval 364 to 794 (PGRIAIVGMA…GGNACILLED (431 aa)). Active-site for beta-ketoacyl synthase activity residues include cysteine 537, histidine 672, and histidine 711. The tract at residues 888–1172 (VFVFTGQGSH…VCSSFVRATL (285 aa)) is malonyl-CoA:ACP transacylase (MAT) domain. The active-site For acyl/malonyl transferase activity is the serine 979. The product template (PT) domain stretch occupies residues 1221-1572 (SLLNLPTYAW…HFHEVENAVL (352 aa)). Positions 1254–1405 (HETFKANIST…GQLIQARWDK (152 aa)) are N-terminal hotdog fold. A PKS/mFAS DH domain is found at 1254 to 1573 (HETFKANIST…FHEVENAVLD (320 aa)). Residues 1425–1573 (ISHRLQPQIL…FHEVENAVLD (149 aa)) form a C-terminal hotdog fold region. One can recognise a Carrier domain in the interval 1616-1693 (QSDAHVLDSI…DLRRVFAPKS (78 aa)). Serine 1653 is subject to O-(pantetheine 4'-phosphoryl)serine. Residues 1700 to 1738 (NDLSRPSLVDDTSQALQSSGSESFDQPPTSVTSTSDSGS) form a disordered region. Positions 1709–1737 (DDTSQALQSSGSESFDQPPTSVTSTSDSG) are enriched in polar residues. The tract at residues 1778–1882 (TGTIATYIHL…PRSKTVEDKN (105 aa)) is thioesterase (TE) domain. The active-site For thioesterase activity is the histidine 2021.

Its pathway is mycotoxin biosynthesis. Its function is as follows. Non-reducing polyketide synthase; part of the gene cluster that mediates the biosynthesis of zearalenone (ZEA), a nonsteroid estrogen that is a contaminant of cereal grains and causes estrogenic disorders in humans and animals. The ZEA backbone is synthesized from a single acetyl-CoA molecule and eight malonyl-CoA molecules. The reducing polyketide synthase ZEA2 is proposed to synthesize a reduced hexaketide intermediate by using different combinations of its reductive domains during each round of condensation. The hexaketide thioester is then transacylated to the non-reducing polyketide synthase ZEA1 and is further condensed with three malonyl-CoAs without reductive tailoring to yield a mixed reduced/unreduced nonaketide. ZEA1 must be able to interact with ZEA2 to facilitate starter-unit acyltransfer and initiate polyketide biosynthesis. ZEA1 also mediates the required C2-C7 cyclization to form the resorcylate core and catalyzes the formation of the macrolactone. ZEA1 exhibits broad starter-unit specificities toward fatty acyl-CoAs ranging in sizes between C6 and C16 and displays the highest activity toward decanoyl-CoA. ZEB1 is then responsible for the chemical conversion of beta-zearalenonol (beta-ZOL) to ZEA in the biosynthetic pathway. This chain is Non-reducing polyketide synthase ZEA1, found in Gibberella zeae (strain ATCC MYA-4620 / CBS 123657 / FGSC 9075 / NRRL 31084 / PH-1) (Wheat head blight fungus).